A 151-amino-acid chain; its full sequence is Small ribosomal subunit protein uS9 (151 aa).

The protein belongs to the universal ribosomal protein uS9 family.

This is Small ribosomal subunit protein uS9 (rps9) from Aeropyrum pernix (strain ATCC 700893 / DSM 11879 / JCM 9820 / NBRC 100138 / K1).